We begin with the raw amino-acid sequence, 147 residues long: Delta-latroinsectotoxin-Lhe1a (147 aa).

4 ANK repeats span residues 57 to 59, 66 to 78, 79 to 96, and 98 to 125; these read VSI, NNWT…IYFK, KNPA…DIEA, and TSIM…TLDE.

The protein belongs to the cationic peptide 01 (latrotoxin) family. 04 (delta-latroinsectotoxin) subfamily. In terms of assembly, homotetramer in membrane. As to expression, expressed by the venom gland.

Its subcellular location is the secreted. The protein resides in the target cell membrane. Functionally, insecticidal presynaptic neurotoxin that induces massive neurotransmitter release at insect (but not vertebrate) neuromuscular junctions. Native toxin forms cation-permeable pores (with high permeability to calcium) in lipid membranes locust muscle membrane and artificial lipid bilayers. May bind to insect neurexin-1 homolog, insect adhesion G protein-coupled receptor L1 homolog, and insect receptor-type tyrosine-protein phosphatase S homolog, and induces neurotransmitter exocytosis both by forming tetrameric pores in membranes and signaling via G protein-coupled receptor. Oligomerization is a process independent of divalent cations. The protein is Delta-latroinsectotoxin-Lhe1a of Latrodectus hesperus (Western black widow spider).